Consider the following 117-residue polypeptide: Large ribosomal subunit protein bL17 (117 aa).

Belongs to the bacterial ribosomal protein bL17 family. As to quaternary structure, part of the 50S ribosomal subunit. Contacts protein L32.

The chain is Large ribosomal subunit protein bL17 from Neorickettsia sennetsu (strain ATCC VR-367 / Miyayama) (Ehrlichia sennetsu).